Here is an 872-residue protein sequence, read N- to C-terminus: Valine--tRNA ligase (872 aa).

The short motif at 46–56 is the 'HIGH' region element; it reads PNVTGKLHIGH. Residues 523–527 carry the 'KMSKS' region motif; sequence KMSKS. Lys526 provides a ligand contact to ATP. Positions 796–872 form a coiled coil; the sequence is IEIANDSFIN…KDKLKELTND (77 aa).

This sequence belongs to the class-I aminoacyl-tRNA synthetase family. ValS type 1 subfamily. In terms of assembly, monomer.

It localises to the cytoplasm. The enzyme catalyses tRNA(Val) + L-valine + ATP = L-valyl-tRNA(Val) + AMP + diphosphate. In terms of biological role, catalyzes the attachment of valine to tRNA(Val). As ValRS can inadvertently accommodate and process structurally similar amino acids such as threonine, to avoid such errors, it has a 'posttransfer' editing activity that hydrolyzes mischarged Thr-tRNA(Val) in a tRNA-dependent manner. In Mycoplasma mycoides subsp. mycoides SC (strain CCUG 32753 / NCTC 10114 / PG1), this protein is Valine--tRNA ligase.